We begin with the raw amino-acid sequence, 131 residues long: Aspartate 1-decarboxylase (131 aa).

S25 acts as the Schiff-base intermediate with substrate; via pyruvic acid in catalysis. A Pyruvic acid (Ser) modification is found at S25. T57 contacts substrate. The active-site Proton donor is Y58. 73 to 75 is a substrate binding site; that stretch reads GAA.

Belongs to the PanD family. Heterooctamer of four alpha and four beta subunits. Pyruvate is required as a cofactor. In terms of processing, is synthesized initially as an inactive proenzyme, which is activated by self-cleavage at a specific serine bond to produce a beta-subunit with a hydroxyl group at its C-terminus and an alpha-subunit with a pyruvoyl group at its N-terminus.

It is found in the cytoplasm. It catalyses the reaction L-aspartate + H(+) = beta-alanine + CO2. Its pathway is cofactor biosynthesis; (R)-pantothenate biosynthesis; beta-alanine from L-aspartate: step 1/1. Its function is as follows. Catalyzes the pyruvoyl-dependent decarboxylation of aspartate to produce beta-alanine. The protein is Aspartate 1-decarboxylase of Chlorobium phaeobacteroides (strain DSM 266 / SMG 266 / 2430).